Reading from the N-terminus, the 227-residue chain is [D-Ala2]-deltorphins (227 aa).

Residues 1 to 20 form the signal peptide; it reads MSFLKKSLLLVLFLGLVSHS. The propeptide occupies 21–46; sequence VCKEEKRETEEENENEEENHEVGSEM. The segment at 22-227 is disordered; the sequence is CKEEKRETEE…DVVGGEAKKM (206 aa). Over residues 30–39 the composition is skewed to acidic residues; that stretch reads EEENENEEEN. A50 bears the D-alanine (Ala) mark. Positions 57–75 are excised as a propeptide; the sequence is DTEEKNENEEENQEEGSEM. Residues 62–72 are compositionally biased toward acidic residues; that stretch reads NENEEENQEEG. The span at 73–87 shows a compositional bias: basic and acidic residues; sequence SEMKRYAFGYPKREP. A D-alanine (Ala) modification is found at A79. Positions 86–104 are excised as a propeptide; the sequence is EPEEENENEEENHEEGSEM. The span at 88 to 98 shows a compositional bias: acidic residues; the sequence is EEENENEEENH. The span at 99 to 108 shows a compositional bias: basic and acidic residues; sequence EEGSEMKRYA. A108 carries the post-translational modification D-alanine (Ala). G113 bears the Glycine amide mark. A propeptide spanning residues 115-140 is cleaved from the precursor; the sequence is EAKKMKREPEEENENEEENHEEGSEM. Residues 124-134 show a composition bias toward acidic residues; it reads EEENENEEENH. Over residues 135 to 144 the composition is skewed to basic and acidic residues; sequence EEGSEMKRYA. The residue at position 144 (A144) is a D-alanine (Ala). Glycine amide is present on G149. Residues 151 to 176 constitute a propeptide that is removed on maturation; that stretch reads EAKKMKREPEEENENEEENHEEGSEM. Residues 160 to 170 show a composition bias toward acidic residues; that stretch reads EEENENEEENH. Basic and acidic residues predominate over residues 171-180; it reads EEGSEMKRYA. A D-alanine (Ala) modification is found at A180. G185 is subject to Glycine amide. Positions 187–212 are excised as a propeptide; that stretch reads EAKKMKREPEEENENEEENHEEGSEM. Positions 196–206 are enriched in acidic residues; sequence EEENENEEENH. Positions 207–216 are enriched in basic and acidic residues; it reads EEGSEMKRYA. A216 is modified (D-alanine (Ala)). G221 carries the post-translational modification Glycine amide. The propeptide occupies 223–227; that stretch reads EAKKM.

The protein belongs to the frog skin active peptide (FSAP) family. Dermorphin subfamily. As to expression, expressed by the skin glands.

Its subcellular location is the secreted. Deltorphin is a heptapeptide with a very potent opiate-like activity. Has high affinity and selectivity for delta-type opioid receptors. The two dermorphin-like peptides have a similar affinity and selectivity for the mu opioid receptor as dermorphin. In Phyllomedusa bicolor (Two-colored leaf frog), this protein is [D-Ala2]-deltorphins.